A 149-amino-acid polypeptide reads, in one-letter code: Inner membrane protein YdcZ (149 aa).

Topologically, residues 1–4 are periplasmic; that stretch reads MNQS. A helical membrane pass occupies residues 5 to 25; sequence LTLAFLIAAGIGLVVQNTLMV. Residues 26 to 33 lie on the Cytoplasmic side of the membrane; the sequence is RITQTSST. A helical transmembrane segment spans residues 34-54; the sequence is ILIAMLLNSLVGIVLFVSILW. At 55 to 70 the chain is on the periplasmic side; sequence FKQGMAGFGELVSSVR. The chain crosses the membrane as a helical span at residues 71 to 91; it reads WWTLIPGLLGSFFVFASISGY. At 92 to 93 the chain is on the cytoplasmic side; that stretch reads QN. Residues 94-114 traverse the membrane as a helical segment; that stretch reads VGAATTIAVLVASQLIGGLML. The Periplasmic portion of the chain corresponds to 115–123; sequence DIFRSHGVP. Residues 124 to 144 traverse the membrane as a helical segment; it reads LRALFGPICGAILLVVGAWLV. Topologically, residues 145-149 are cytoplasmic; the sequence is ARRSF.

The protein resides in the cell inner membrane. This chain is Inner membrane protein YdcZ (ydcZ), found in Escherichia coli (strain K12).